A 346-amino-acid chain; its full sequence is Biotin synthase (346 aa).

The Radical SAM core domain occupies 38–256 (RQVQVSTLLS…IAVARIMMPT (219 aa)). 3 residues coordinate [4Fe-4S] cluster: Cys-53, Cys-57, and Cys-60. [2Fe-2S] cluster is bound by residues Cys-97, Cys-128, Cys-188, and Arg-260.

This sequence belongs to the radical SAM superfamily. Biotin synthase family. As to quaternary structure, homodimer. [4Fe-4S] cluster is required as a cofactor. The cofactor is [2Fe-2S] cluster.

The enzyme catalyses (4R,5S)-dethiobiotin + (sulfur carrier)-SH + 2 reduced [2Fe-2S]-[ferredoxin] + 2 S-adenosyl-L-methionine = (sulfur carrier)-H + biotin + 2 5'-deoxyadenosine + 2 L-methionine + 2 oxidized [2Fe-2S]-[ferredoxin]. The protein operates within cofactor biosynthesis; biotin biosynthesis; biotin from 7,8-diaminononanoate: step 2/2. Functionally, catalyzes the conversion of dethiobiotin (DTB) to biotin by the insertion of a sulfur atom into dethiobiotin via a radical-based mechanism. This chain is Biotin synthase, found in Pseudescherichia vulneris (Escherichia vulneris).